A 341-amino-acid chain; its full sequence is Dihydroorotate dehydrogenase (quinone) (341 aa).

FMN-binding positions include 61–65 (AGLDK) and T85. K65 provides a ligand contact to substrate. 110 to 114 (NRMGF) lines the substrate pocket. 2 residues coordinate FMN: N138 and N171. N171 is a binding site for substrate. S174 serves as the catalytic Nucleophile. N176 serves as a coordination point for substrate. FMN-binding residues include K216 and T244. 245 to 246 (NT) provides a ligand contact to substrate. FMN is bound by residues G267, G296, and 317-318 (YS).

The protein belongs to the dihydroorotate dehydrogenase family. Type 2 subfamily. In terms of assembly, monomer. It depends on FMN as a cofactor.

Its subcellular location is the cell membrane. It catalyses the reaction (S)-dihydroorotate + a quinone = orotate + a quinol. Its pathway is pyrimidine metabolism; UMP biosynthesis via de novo pathway; orotate from (S)-dihydroorotate (quinone route): step 1/1. In terms of biological role, catalyzes the conversion of dihydroorotate to orotate with quinone as electron acceptor. The protein is Dihydroorotate dehydrogenase (quinone) of Pseudomonas putida (strain W619).